A 941-amino-acid chain; its full sequence is Glycine dehydrogenase (decarboxylating) (941 aa).

An N6-(pyridoxal phosphate)lysine modification is found at Lys692.

Belongs to the GcvP family. The glycine cleavage system is composed of four proteins: P, T, L and H. Pyridoxal 5'-phosphate is required as a cofactor.

The catalysed reaction is N(6)-[(R)-lipoyl]-L-lysyl-[glycine-cleavage complex H protein] + glycine + H(+) = N(6)-[(R)-S(8)-aminomethyldihydrolipoyl]-L-lysyl-[glycine-cleavage complex H protein] + CO2. The glycine cleavage system catalyzes the degradation of glycine. The P protein binds the alpha-amino group of glycine through its pyridoxal phosphate cofactor; CO(2) is released and the remaining methylamine moiety is then transferred to the lipoamide cofactor of the H protein. This is Glycine dehydrogenase (decarboxylating) from Mycobacterium tuberculosis (strain ATCC 25177 / H37Ra).